The following is a 245-amino-acid chain: 4-hydroxy-tetrahydrodipicolinate reductase (245 aa).

Residues 7–12 (GAKGKV), 75–77 (GTT), and 102–105 (APNF) each bind NAD(+). The active-site Proton donor/acceptor is the histidine 132. Histidine 133 provides a ligand contact to (S)-2,3,4,5-tetrahydrodipicolinate. Lysine 136 functions as the Proton donor in the catalytic mechanism. Residue 142 to 143 (GT) participates in (S)-2,3,4,5-tetrahydrodipicolinate binding.

The protein belongs to the DapB family.

It localises to the cytoplasm. The enzyme catalyses (S)-2,3,4,5-tetrahydrodipicolinate + NAD(+) + H2O = (2S,4S)-4-hydroxy-2,3,4,5-tetrahydrodipicolinate + NADH + H(+). It carries out the reaction (S)-2,3,4,5-tetrahydrodipicolinate + NADP(+) + H2O = (2S,4S)-4-hydroxy-2,3,4,5-tetrahydrodipicolinate + NADPH + H(+). It functions in the pathway amino-acid biosynthesis; L-lysine biosynthesis via DAP pathway; (S)-tetrahydrodipicolinate from L-aspartate: step 4/4. Functionally, catalyzes the conversion of 4-hydroxy-tetrahydrodipicolinate (HTPA) to tetrahydrodipicolinate. The polypeptide is 4-hydroxy-tetrahydrodipicolinate reductase (Mycobacterium tuberculosis (strain ATCC 25177 / H37Ra)).